The chain runs to 362 residues: Solute carrier family 25 member 3 (362 aa).

A mitochondrion-targeting transit peptide spans 1–49 (MYSSVVHLARANPFNAPHLQLVHDGLAGPRSDPAGPPGPPRRSRNLAAA). Topologically, residues 50–63 (AVEEQYSCDYGSGR) are mitochondrial intermembrane. Solcar repeat units follow at residues 63 to 147 (RFFI…FKVL), 160 to 244 (WRTS…TVEA), and 261 to 339 (EQLV…VKVY). A helical transmembrane segment spans residues 64-86 (FFILCGLGGIISCGTTHTALVPL). Residues 87–121 (DLVKCRMQVDPQKYKSIFNGFSVTLKEDGFRGLAK) lie on the Mitochondrial matrix side of the membrane. K99 carries the post-translational modification N6-acetyllysine. Position 112 is an N6-methyllysine (K112). A helical membrane pass occupies residues 122 to 141 (GWAPTFIGYSLQGLCKFGFY). Residues 142 to 161 (EVFKVLYSNMLGEENAYLWR) are Mitochondrial intermembrane-facing. Residues 162–183 (TSLYLAASASAEFFADIALAPM) form a helical membrane-spanning segment. Topologically, residues 184–218 (EAAKVRIQTQPGYANTLRDAAPKMYKEEGLKAFYK) are mitochondrial matrix. Y196 carries the phosphotyrosine modification. The residue at position 209 (K209) is an N6-acetyllysine. A helical transmembrane segment spans residues 219 to 238 (GVAPLWMRQIPYTMMKFACF). The Mitochondrial intermembrane portion of the chain corresponds to 239-261 (ERTVEALYKFVVPKPRSECSKPE). The helical transmembrane segment at 262–284 (QLVVTFVAGYIAGVFCAIVSHPA) threads the bilayer. Residues 285–314 (DSVVSVLNKEKGSSASEVLKRLGFRGVWKG) are Mitochondrial matrix-facing. A helical transmembrane segment spans residues 315–333 (LFARIIMIGTLTALQWFIY). At 334 to 362 (DSVKVYFRLPRPPPPEMPESLKKKLGYTQ) the chain is on the mitochondrial intermembrane side.

Belongs to the mitochondrial carrier (TC 2.A.29) family. In terms of assembly, interacts with PPIF; the interaction is impaired by CsA. In terms of tissue distribution, expressed in heart, diaphragm and skeletal muscle (at protein level). Not detected in liver, lung, brain, and kidney (at protein level). As to expression, ubiquitous (at protein level).

It is found in the mitochondrion inner membrane. It carries out the reaction phosphate(in) + H(+)(in) = phosphate(out) + H(+)(out). Up-regulated in the presence of cardiolipin. Inorganic ion transporter that transports phosphate or copper ions across the mitochondrial inner membrane into the matrix compartment. Mediates proton-coupled symport of phosphate ions necessary for mitochondrial oxidative phosphorylation of ADP to ATP. Transports copper ions probably in the form of anionic copper(I) complexes to maintain mitochondrial matrix copper pool and to supply copper for cytochrome C oxidase complex assembly. May also play a role in regulation of the mitochondrial permeability transition pore (mPTP). The sequence is that of Solute carrier family 25 member 3 from Bos taurus (Bovine).